The sequence spans 280 residues: Hydroxyacyl-thioester dehydratase type 2, mitochondrial (280 aa).

It belongs to the HTD2 family.

The protein resides in the mitochondrion. Its function is as follows. Mitochondrial 3-hydroxyacyl-thioester dehydratase involved in fatty acid biosynthesis. Required for respiratory growth and for normal mitochondrial morphology. The polypeptide is Hydroxyacyl-thioester dehydratase type 2, mitochondrial (HTD2) (Saccharomyces cerevisiae (strain ATCC 204508 / S288c) (Baker's yeast)).